The following is a 173-amino-acid chain: Large ribosomal subunit protein uL22c (173 aa).

The protein belongs to the universal ribosomal protein uL22 family. In terms of assembly, part of the 50S ribosomal subunit.

It is found in the plastid. It localises to the chloroplast. Its function is as follows. This protein binds specifically to 23S rRNA. Functionally, the globular domain of the protein is located near the polypeptide exit tunnel on the outside of the subunit, while an extended beta-hairpin is found that lines the wall of the exit tunnel in the center of the 70S ribosome. This Drimys granadensis protein is Large ribosomal subunit protein uL22c (rpl22).